Here is a 126-residue protein sequence, read N- to C-terminus: Putative lipoprotein LprD (126 aa).

The first 19 residues, 1 to 19 (MSTTRRRRPALVALVTIAA), serve as a signal peptide directing secretion. Residue Cys-20 is the site of N-palmitoyl cysteine attachment. A lipid anchor (S-diacylglycerol cysteine) is attached at Cys-20. A helical transmembrane segment spans residues 44–64 (GYALQWPLFAGFCLYTYHNFV).

It to M.tuberculosis Rv1343c.

The protein localises to the cell membrane. This is Putative lipoprotein LprD (lprD) from Mycobacterium leprae (strain TN).